The primary structure comprises 901 residues: HTH-type transcriptional regulator MalT (901 aa).

Position 39–46 (39–46 (SPAGYGKT)) interacts with ATP. In terms of domain architecture, HTH luxR-type spans 829-894 (ELIRTSPLTQ…DAVQHAQQLL (66 aa)). Positions 853 to 872 (NEQIAGELAVAATTIKTHIR) form a DNA-binding region, H-T-H motif.

This sequence belongs to the MalT family. In terms of assembly, monomer in solution. Oligomerizes to an active state in the presence of the positive effectors ATP and maltotriose.

Its activity is regulated as follows. Activated by ATP and maltotriose, which are both required for DNA binding. Functionally, positively regulates the transcription of the maltose regulon whose gene products are responsible for uptake and catabolism of malto-oligosaccharides. Specifically binds to the promoter region of its target genes, recognizing a short DNA motif called the MalT box. The chain is HTH-type transcriptional regulator MalT from Salmonella gallinarum (strain 287/91 / NCTC 13346).